The sequence spans 137 residues: Peptide methionine sulfoxide reductase MsrB (137 aa).

The MsrB domain occupies 7–129; that stretch reads AEELKKNLSE…NSASLRFTDG (123 aa). Zn(2+) is bound by residues C46, C49, C95, and C98. The Nucleophile role is filled by C118.

This sequence belongs to the MsrB Met sulfoxide reductase family. The cofactor is Zn(2+).

The catalysed reaction is L-methionyl-[protein] + [thioredoxin]-disulfide + H2O = L-methionyl-(R)-S-oxide-[protein] + [thioredoxin]-dithiol. This chain is Peptide methionine sulfoxide reductase MsrB, found in Escherichia coli O45:K1 (strain S88 / ExPEC).